We begin with the raw amino-acid sequence, 106 residues long: P4 prophage-derived uncharacterized protein t2655 (106 aa).

This Salmonella typhi protein is P4 prophage-derived uncharacterized protein t2655.